We begin with the raw amino-acid sequence, 264 residues long: Phosphonates import ATP-binding protein PhnC (264 aa).

The 248-residue stretch at 7–254 folds into the ABC transporter domain; that stretch reads LSIRAASKTF…KLIDIYGPEF (248 aa). ATP is bound at residue 39–46; the sequence is GPSGSGKS.

It belongs to the ABC transporter superfamily. Phosphonates importer (TC 3.A.1.9.1) family. The complex is composed of two ATP-binding proteins (PhnC), two transmembrane proteins (PhnE) and a solute-binding protein (PhnD).

Its subcellular location is the cell inner membrane. It catalyses the reaction phosphonate(out) + ATP + H2O = phosphonate(in) + ADP + phosphate + H(+). Functionally, part of the ABC transporter complex PhnCDE involved in phosphonates import. Responsible for energy coupling to the transport system. This Caulobacter vibrioides (strain ATCC 19089 / CIP 103742 / CB 15) (Caulobacter crescentus) protein is Phosphonates import ATP-binding protein PhnC.